Here is an 89-residue protein sequence, read N- to C-terminus: Small ribosomal subunit protein uS15 (89 aa).

It belongs to the universal ribosomal protein uS15 family. In terms of assembly, part of the 30S ribosomal subunit. Forms a bridge to the 50S subunit in the 70S ribosome, contacting the 23S rRNA.

Functionally, one of the primary rRNA binding proteins, it binds directly to 16S rRNA where it helps nucleate assembly of the platform of the 30S subunit by binding and bridging several RNA helices of the 16S rRNA. Its function is as follows. Forms an intersubunit bridge (bridge B4) with the 23S rRNA of the 50S subunit in the ribosome. This chain is Small ribosomal subunit protein uS15, found in Nostoc sp. (strain PCC 7120 / SAG 25.82 / UTEX 2576).